We begin with the raw amino-acid sequence, 111 residues long: Translation initiation factor 1A 1 (111 aa).

A disordered region spans residues 1–26 (MTLADLKKPTSRATPSTEETFTRVRT). The region spanning 22 to 96 (TRVRTPRREN…EKADVIWKYT (75 aa)) is the S1-like domain.

Belongs to the eIF-1A family.

In terms of biological role, seems to be required for maximal rate of protein biosynthesis. Enhances ribosome dissociation into subunits and stabilizes the binding of the initiator Met-tRNA(I) to 40 S ribosomal subunits. In Methanosarcina acetivorans (strain ATCC 35395 / DSM 2834 / JCM 12185 / C2A), this protein is Translation initiation factor 1A 1 (eIF1A1).